The primary structure comprises 366 residues: Probable dual-specificity RNA methyltransferase RlmN (366 aa).

E107 serves as the catalytic Proton acceptor. The Radical SAM core domain occupies 113 to 342 (AEERMTACLS…MAQKFHVTVR (230 aa)). C120 and C353 are joined by a disulfide. The [4Fe-4S] cluster site is built by C127, C131, and C134. Residues 177–178 (GE), S210, 233–235 (SLH), and N310 each bind S-adenosyl-L-methionine. C353 (S-methylcysteine intermediate) is an active-site residue.

The protein belongs to the radical SAM superfamily. RlmN family. Requires [4Fe-4S] cluster as cofactor.

Its subcellular location is the cytoplasm. It catalyses the reaction adenosine(2503) in 23S rRNA + 2 reduced [2Fe-2S]-[ferredoxin] + 2 S-adenosyl-L-methionine = 2-methyladenosine(2503) in 23S rRNA + 5'-deoxyadenosine + L-methionine + 2 oxidized [2Fe-2S]-[ferredoxin] + S-adenosyl-L-homocysteine. It carries out the reaction adenosine(37) in tRNA + 2 reduced [2Fe-2S]-[ferredoxin] + 2 S-adenosyl-L-methionine = 2-methyladenosine(37) in tRNA + 5'-deoxyadenosine + L-methionine + 2 oxidized [2Fe-2S]-[ferredoxin] + S-adenosyl-L-homocysteine. In terms of biological role, specifically methylates position 2 of adenine 2503 in 23S rRNA and position 2 of adenine 37 in tRNAs. The chain is Probable dual-specificity RNA methyltransferase RlmN from Chlorobium chlorochromatii (strain CaD3).